The sequence spans 204 residues: Altered inheritance of mitochondria protein 20 (204 aa).

A helical membrane pass occupies residues 6 to 26; that stretch reads VAVGTAVGIPIAVGVIIALIF.

This sequence belongs to the SKG1 family.

Its subcellular location is the vacuole membrane. Involved in cell cycle progression and surviving DNA damage. The protein is Altered inheritance of mitochondria protein 20 (AIM20) of Saccharomyces cerevisiae (strain RM11-1a) (Baker's yeast).